We begin with the raw amino-acid sequence, 318 residues long: Transaldolase (318 aa).

Lys-132 acts as the Schiff-base intermediate with substrate in catalysis.

Belongs to the transaldolase family. Type 1 subfamily. As to quaternary structure, homodimer.

The protein resides in the cytoplasm. The enzyme catalyses D-sedoheptulose 7-phosphate + D-glyceraldehyde 3-phosphate = D-erythrose 4-phosphate + beta-D-fructose 6-phosphate. The protein operates within carbohydrate degradation; pentose phosphate pathway; D-glyceraldehyde 3-phosphate and beta-D-fructose 6-phosphate from D-ribose 5-phosphate and D-xylulose 5-phosphate (non-oxidative stage): step 2/3. Its function is as follows. Transaldolase is important for the balance of metabolites in the pentose-phosphate pathway. This is Transaldolase from Allorhizobium ampelinum (strain ATCC BAA-846 / DSM 112012 / S4) (Agrobacterium vitis (strain S4)).